We begin with the raw amino-acid sequence, 499 residues long: Neuronal acetylcholine receptor subunit alpha-3 (499 aa).

Residues 1-25 (MGVVLPPPPLSMLMLVLMLLPVASA) form the signal peptide. Residues 26–244 (SEAEHRLFQY…PLFYTINLII (219 aa)) lie on the Extracellular side of the membrane. 2 N-linked (GlcNAc...) asparagine glycosylation sites follow: Asn49 and Asn166. 2 disulfide bridges follow: Cys153-Cys167 and Cys217-Cys218. Residues 245 to 260 (PCLLISFLTVLVFYLP) traverse the membrane as a helical segment. Residues 261-262 (SD) lie on the Cytoplasmic side of the membrane. The chain crosses the membrane as a helical span at residues 263–279 (CGEKVTLCISVLLSLTV). Glu265 serves as a coordination point for Na(+). Topologically, residues 280-301 (FLLVITETIPSTSLVIPLIGEY) are extracellular. The chain crosses the membrane as a helical span at residues 302–320 (LLFTMIFVTLSIVITVFVL). Residues 321–468 (NVHYRTPTTH…QDDWKYVAMV (148 aa)) are Cytoplasmic-facing. Phosphoserine occurs at positions 407 and 410. Residues 469 to 487 (IDRIFLWVFILVCILGTAG) form a helical membrane-spanning segment. The Extracellular segment spans residues 488–499 (LFLQPLMARDDT).

The protein belongs to the ligand-gated ion channel (TC 1.A.9) family. Acetylcholine receptor (TC 1.A.9.1) subfamily. Alpha-3/CHRNA3 sub-subfamily. As to quaternary structure, neuronal AChR is composed of two different types of subunits: alpha and beta. CHRNA3/Alpha-3 subunit can be combined to CHRNB2/beta-2 or CHRNB4/beta-4 to give rise to functional receptors. Part of a complex composed of STUB1/CHIP, VCP/p97, CHRNA3, and UBXN2A that modulates the ubiquitination and endoplasmic reticulum-associated degradation (ERAD) of CHRNA3. Within the complex UBXN2A acts as a scaffold protein required for the interaction of CHRNA3 with VCP/p97, this interaction also inhibits CHRNA3 ubiquitination by STUB1/CHIP and subsequently ERAD. Interacts with UBXN2A (via SEP domain), the interaction is required for the interaction of CHRNA3 in the STUB1:VCP:UBXN2A complex. Interacts with RIC3; which is required for proper folding and assembly. Interacts with LYPD6. Ubiquitinated; by STUB1/CHIP and thereafter degraded by the 26S proteosome complex. As to expression, expressed in the brain (at protein level).

It localises to the synaptic cell membrane. It is found in the cell membrane. The protein resides in the endoplasmic reticulum. The protein localises to the golgi apparatus. The enzyme catalyses K(+)(in) = K(+)(out). It catalyses the reaction Na(+)(in) = Na(+)(out). It carries out the reaction Ca(2+)(in) = Ca(2+)(out). With respect to regulation, activated by a myriad of ligands such as acetylcholine, cytisine, nicotine, choline and epibatidine. The heteropentamer CHRNA3:CHRNB2 activity is blocked by alpha-conotoxins ImI, ImII, PnIA, GID and MII. The heteropentamer CHRNA3:CHRNB4 activity is blocked by the alpha-conotoxin ImI. Functionally, component of neuronal acetylcholine receptors (nAChRs) that function as pentameric, ligand-gated cation channels with high calcium permeability among other activities. nAChRs are excitatory neurotrasnmitter receptors formed by a collection of nAChR subunits known to mediate synaptic transmission in the nervous system and the neuromuscular junction. Each nAchR subunit confers differential attributes to channel properties, including activation, deactivation and desensitization kinetics, pH sensitivity, cation permeability, and binding to allosteric modulators. CHRNA3 forms heteropentameric neuronal acetylcholine receptors with CHRNA5, CHRNB2 and CHRNB4. CHRNA3:CHRNB4 being predominant in neurons of the autonomic ganglia, it is known as ganglionic nicotinic receptor. CHRNA3:CHRNB4 or CHRNA3:CHRNA5:CHRNB4 play also an important role in the habenulo-interpeduncular tract, modulating the mesolimbic dopamine system and affecting reward circuits and addiction. Hypothalamic CHRNA3:CHRNB4 nAChR activation by nicotine leads to activation of POMC neurons and a decrease in food intake. Also expressed in the urothelium where it modulates reflex bladder activity by increasing intracellular calcium through extracellular influx and basal ATP release. In Mus musculus (Mouse), this protein is Neuronal acetylcholine receptor subunit alpha-3 (Chrna3).